We begin with the raw amino-acid sequence, 156 residues long: SPbeta prophage-derived uncharacterized protein YorH (156 aa).

The sequence is that of SPbeta prophage-derived uncharacterized protein YorH (yorH) from Bacillus subtilis (strain 168).